Here is a 160-residue protein sequence, read N- to C-terminus: S-ribosylhomocysteine lyase (160 aa).

3 residues coordinate Fe cation: H57, H61, and C127.

This sequence belongs to the LuxS family. Homodimer. The cofactor is Fe cation.

It catalyses the reaction S-(5-deoxy-D-ribos-5-yl)-L-homocysteine = (S)-4,5-dihydroxypentane-2,3-dione + L-homocysteine. Functionally, involved in the synthesis of autoinducer 2 (AI-2) which is secreted by bacteria and is used to communicate both the cell density and the metabolic potential of the environment. The regulation of gene expression in response to changes in cell density is called quorum sensing. Catalyzes the transformation of S-ribosylhomocysteine (RHC) to homocysteine (HC) and 4,5-dihydroxy-2,3-pentadione (DPD). This Streptococcus pyogenes serotype M4 (strain MGAS10750) protein is S-ribosylhomocysteine lyase.